Consider the following 350-residue polypeptide: tRNA uridine(34) hydroxylase (350 aa).

In terms of domain architecture, Rhodanese spans 146–240 (DDPDALFIDM…YARKAREQGL (95 aa)). Cys-200 serves as the catalytic Cysteine persulfide intermediate.

It belongs to the TrhO family.

The enzyme catalyses uridine(34) in tRNA + AH2 + O2 = 5-hydroxyuridine(34) in tRNA + A + H2O. Catalyzes oxygen-dependent 5-hydroxyuridine (ho5U) modification at position 34 in tRNAs, the first step in 5-carboxymethoxyuridine (cmo5U) biosynthesis. May be part of an alternate pathway, which is able to bypass cmo5U biogenesis in a subset of tRNAs under aerobic conditions. The protein is tRNA uridine(34) hydroxylase of Escherichia coli O45:K1 (strain S88 / ExPEC).